A 148-amino-acid chain; its full sequence is uncharacterized protein (148 aa).

An N-terminal signal peptide occupies residues 1–16 (MDVLFIALLVAPLILG). Asn-50 carries an N-linked (GlcNAc...) asparagine glycan. Residues 91–125 (MDPQNPVTTKPVTTEPVTTEPVTTEPQSPNQNDAM) form a disordered region. A compositionally biased stretch (low complexity) spans 96 to 116 (PVTTKPVTTEPVTTEPVTTEP).

The protein localises to the secreted. This is an uncharacterized protein from Mus musculus (Mouse).